A 638-amino-acid chain; its full sequence is Probable inactive receptor kinase At4g23740 (638 aa).

An N-terminal signal peptide occupies residues 1-24 (MEALRIYLWSLCLSLCLIIYGANS). LRR repeat units follow at residues 94-117 (ALRV…VELK), 118-139 (DLAF…DFSV), 142-165 (NLTS…SRLK), 166-188 (RIQS…SVLS), and 189-198 (SLQHIDLSNN). The helical transmembrane segment at 257 to 277 (VFLLIVIAVSIVVITALAFVL) threads the bilayer. One can recognise a Protein kinase domain in the interval 337–608 (RASAEVLGKG…SDLVRLIENV (272 aa)). Ser-339 is modified (phosphoserine). 343–351 (LGKGTFGTT) serves as a coordination point for ATP. Position 360 is a phosphothreonine (Thr-360). Lys-365 serves as a coordination point for ATP. 2 positions are modified to phosphoserine: Ser-416 and Ser-419. Phosphothreonine occurs at positions 436 and 509. Residue Ser-513 is modified to Phosphoserine. A disordered region spans residues 612–638 (RTSIEPEPELKPKSENGASETSTPSEI). Basic and acidic residues predominate over residues 613–625 (TSIEPEPELKPKS). Over residues 627 to 638 (NGASETSTPSEI) the composition is skewed to polar residues.

This sequence belongs to the protein kinase superfamily.

It localises to the membrane. This Arabidopsis thaliana (Mouse-ear cress) protein is Probable inactive receptor kinase At4g23740.